A 135-amino-acid chain; its full sequence is FK506-binding protein 2 (135 aa).

Positions 1–17 (MLLKSLFLLFLTAIAFA) are cleaved as a signal peptide. A PPIase FKBP-type domain is found at 40–127 (GDLISVHYEG…VFVAELVDIA (88 aa)). Residues 132–135 (HDEL) carry the Prevents secretion from ER motif.

Belongs to the FKBP-type PPIase family. FKBP2 subfamily.

It is found in the endoplasmic reticulum. It catalyses the reaction [protein]-peptidylproline (omega=180) = [protein]-peptidylproline (omega=0). With respect to regulation, inhibited by both FK506 and rapamycin. Its function is as follows. PPIases accelerate the folding of proteins. It catalyzes the cis-trans isomerization of proline imidic peptide bonds in oligopeptides. The protein is FK506-binding protein 2 (FPR2) of Debaryomyces hansenii (strain ATCC 36239 / CBS 767 / BCRC 21394 / JCM 1990 / NBRC 0083 / IGC 2968) (Yeast).